Reading from the N-terminus, the 139-residue chain is Cystatin-11 (139 aa).

The signal sequence occupies residues 1–28 (MAAGSWKATRLLLAILVALVAFSYQVKR). 2 cysteine pairs are disulfide-bonded: Cys-94–Cys-102 and Cys-115–Cys-135. Residue Asn-134 is glycosylated (N-linked (GlcNAc...) asparagine).

It belongs to the cystatin family. In terms of tissue distribution, expressed in epididymis, where it localizes to the proximal caput and also part of the midcaput. Not detected in other tissues tested.

The protein resides in the secreted. Has antibacterial activity against the Gram-negative bacteria E.coli. May play a role in sperm maturation and fertilization. This chain is Cystatin-11, found in Mus musculus (Mouse).